The following is a 103-amino-acid chain: Small ribosomal subunit protein uS10 (103 aa).

It belongs to the universal ribosomal protein uS10 family. Part of the 30S ribosomal subunit.

Functionally, involved in the binding of tRNA to the ribosomes. The chain is Small ribosomal subunit protein uS10 from Thioalkalivibrio sulfidiphilus (strain HL-EbGR7).